The primary structure comprises 731 residues: E3 ubiquitin-protein ligase SMURF1 (731 aa).

Positions 1–120 constitute a C2 domain; the sequence is MSNVVTRRGG…TGYQRLDLCK (120 aa). Residues 210–235 are disordered; that stretch reads RVRGPEVREHVQTPQNRSHGFQSQDL. Residues 221–234 are compositionally biased toward polar residues; sequence QTPQNRSHGFQSQD. WW domains follow at residues 233 to 266 and 279 to 312; these read QDLP…DPRI and GSLP…DPRL. Residues 394-731 form the HECT domain; that stretch reads RPKDLKKRLM…VEETSGFAVE (338 aa). Catalysis depends on cysteine 699, which acts as the Glycyl thioester intermediate.

Its subcellular location is the cytoplasm. The protein resides in the cell membrane. The enzyme catalyses S-ubiquitinyl-[E2 ubiquitin-conjugating enzyme]-L-cysteine + [acceptor protein]-L-lysine = [E2 ubiquitin-conjugating enzyme]-L-cysteine + N(6)-ubiquitinyl-[acceptor protein]-L-lysine.. It functions in the pathway protein modification; protein ubiquitination. Its function is as follows. E3 ubiquitin-protein ligase that acts as a negative regulator of BMP signaling pathway. Mediates ubiquitination and degradation of smad1 and smad5, 2 receptor-regulated SMADs specific for the BMP pathway. Promotes ubiquitination and subsequent proteasomal degradation of TRAF family members and rhoa. May play a role in dendrite formation by melanocytes. The protein is E3 ubiquitin-protein ligase SMURF1 (smurf1) of Xenopus laevis (African clawed frog).